Here is a 518-residue protein sequence, read N- to C-terminus: MVRSGKNGDLHLKQIAYYKRTGEYHPTTLPSERSGIRRAAKKFVFKEKKLFYVGKDRKQNRLVVVSEEEKKKVLRECHENGPGVHHGISRTLTLVESGYYWTSVTNDVKQWVYACQHCQVAKNTVIVAPQQHLPMVGNPWSVVTVDLMGPFHTSNRSHVYAIIMTDLFTKWVMILPLCDVSASEISKAIINIFFLYGPPQKIIMDQRDEFIEQINVELYRLFGAKEIVISRASGSVNPAENTPSTIKTFLSKHCADHPNSWDEHLPALSFAFNVTHLEPNKNTPYFQMFNRNPCVLECPPEEGSEGTSVFARIVAAIREADGVVENKTPASSQMENNNSDELSKSKVVKKKAKQLNPFHLKVGHEVLRQRKNWWKDGRFQSEWVGPCVIDYITESGCAVLRDNTGTRLKRPIKMSHLRPYVRESSEQDSLYLLQGSIVADHDYIGLPEIPVGTYQANILVEDATIGIADNELLISSKDHELLEYRNSKISALVEDHSSLEKQTFSLLDSSNQVLEYLS.

An Integrase catalytic domain is found at 130–292 (QQHLPMVGNP…TPYFQMFNRN (163 aa)). Serine 498 is subject to Phosphoserine.

This chain is Gypsy retrotransposon integrase-like protein 1 (Gin1), found in Mus musculus (Mouse).